The following is a 114-amino-acid chain: Hydrogenase maturation factor HypA (114 aa).

Residue His2 coordinates Ni(2+). The Zn(2+) site is built by Cys74, Cys77, Cys90, and Cys93.

Belongs to the HypA/HybF family.

Functionally, involved in the maturation of [NiFe] hydrogenases. Required for nickel insertion into the metal center of the hydrogenase. This Campylobacter jejuni subsp. jejuni serotype O:2 (strain ATCC 700819 / NCTC 11168) protein is Hydrogenase maturation factor HypA.